A 377-amino-acid polypeptide reads, in one-letter code: Succinyl-diaminopimelate desuccinylase (377 aa).

H67 is a Zn(2+) binding site. D69 is an active-site residue. D100 is a Zn(2+) binding site. E134 acts as the Proton acceptor in catalysis. E135, E163, and H349 together coordinate Zn(2+).

This sequence belongs to the peptidase M20A family. DapE subfamily. Homodimer. It depends on Zn(2+) as a cofactor. Requires Co(2+) as cofactor.

The catalysed reaction is N-succinyl-(2S,6S)-2,6-diaminopimelate + H2O = (2S,6S)-2,6-diaminopimelate + succinate. It participates in amino-acid biosynthesis; L-lysine biosynthesis via DAP pathway; LL-2,6-diaminopimelate from (S)-tetrahydrodipicolinate (succinylase route): step 3/3. Its function is as follows. Catalyzes the hydrolysis of N-succinyl-L,L-diaminopimelic acid (SDAP), forming succinate and LL-2,6-diaminopimelate (DAP), an intermediate involved in the bacterial biosynthesis of lysine and meso-diaminopimelic acid, an essential component of bacterial cell walls. This chain is Succinyl-diaminopimelate desuccinylase, found in Haemophilus influenzae (strain PittGG).